The following is a 583-amino-acid chain: uncharacterized protein (583 aa).

The region spanning 162–424 (YGIFAAPILD…RGVQQNPFAK (263 aa)) is the FAD-binding FR-type domain.

The protein belongs to the flavoprotein pyridine nucleotide cytochrome reductase family. FAD is required as a cofactor.

The protein localises to the mitochondrion. This is an uncharacterized protein from Schizosaccharomyces pombe (strain 972 / ATCC 24843) (Fission yeast).